Here is a 549-residue protein sequence, read N- to C-terminus: Cation/acetate symporter ActP (549 aa).

The next 13 membrane-spanning stretches (helical) occupy residues 33 to 53 (WQAIIMFLIFVVFTLGITYWA), 77 to 97 (LAIAGDYMSAASFLGISALVF), 103 to 123 (GLIYSLGFLVGWPIILFLIAE), 148 to 168 (ILSACGSLVVVALYLIAQMVG), 183 to 203 (IAVVLVGVLMMMYVLFGGMLA), 206 to 226 (WVQIIKAVLLLFGASFMAFMV), 262 to 282 (ISALSLGLGLMFGTAGLPHIL), 303 to 323 (GFMGYFYILTFIIGFGAIMLV), 355 to 375 (LFLGFISAVAFATILAVVAGL), 404 to 424 (VSKITVLILGVIAIILGVLFE), 428 to 448 (IAFMVGLAFAIAASCNFPIIL), 464 to 484 (GGWLGLITAVVLMILGPTIWV), and 493 to 513 (IFPYEYPALFSITVAFLGIWF).

This sequence belongs to the sodium:solute symporter (SSF) (TC 2.A.21) family.

The protein resides in the cell inner membrane. Transports acetate. The polypeptide is Cation/acetate symporter ActP (Escherichia coli (strain ATCC 8739 / DSM 1576 / NBRC 3972 / NCIMB 8545 / WDCM 00012 / Crooks)).